We begin with the raw amino-acid sequence, 274 residues long: Large ribosomal subunit protein uL2 (274 aa).

A disordered region spans residues 223–274 (VAMNPVDHPHGGGEGRTSGGRHPVTPWGVPTKGYKTRSNKRTDKYIVRRRNK).

Belongs to the universal ribosomal protein uL2 family. As to quaternary structure, part of the 50S ribosomal subunit. Forms a bridge to the 30S subunit in the 70S ribosome.

Its function is as follows. One of the primary rRNA binding proteins. Required for association of the 30S and 50S subunits to form the 70S ribosome, for tRNA binding and peptide bond formation. It has been suggested to have peptidyltransferase activity; this is somewhat controversial. Makes several contacts with the 16S rRNA in the 70S ribosome. The protein is Large ribosomal subunit protein uL2 of Shewanella sp. (strain ANA-3).